Consider the following 264-residue polypeptide: Triosephosphate isomerase (264 aa).

N13 to K15 lines the substrate pocket. H106 serves as the catalytic Electrophile. E179 serves as the catalytic Proton acceptor. Substrate is bound by residues G185, S223, and G244–G245.

It belongs to the triosephosphate isomerase family. Homodimer.

The protein localises to the cytoplasm. It carries out the reaction D-glyceraldehyde 3-phosphate = dihydroxyacetone phosphate. The protein operates within carbohydrate biosynthesis; gluconeogenesis. It functions in the pathway carbohydrate degradation; glycolysis; D-glyceraldehyde 3-phosphate from glycerone phosphate: step 1/1. Involved in the gluconeogenesis. Catalyzes stereospecifically the conversion of dihydroxyacetone phosphate (DHAP) to D-glyceraldehyde-3-phosphate (G3P). In Acinetobacter baumannii (strain SDF), this protein is Triosephosphate isomerase.